The sequence spans 604 residues: NADPH oxidase activator (604 aa).

2 TPR repeats span residues 36-69 (SKINYNIGVMYIKSNNFRNAIEYFNRSVEQDKYL) and 71-103 (SSYYMRAIAHHMNGELNHAIVDYDETISKLRGH). Disordered stretches follow at residues 180–298 (FKPP…KLPS) and 383–581 (DIIP…PYQV). Low complexity-rich tracts occupy residues 194–215 (SATTSSIQSSSPSTPMSSSPPS) and 225–243 (PSSSSPSSSSPSLSSSSSP). The span at 244-260 (KLPPTPKPSFGSSPPPS) shows a compositional bias: pro residues. Residues 261–284 (SSSSSSSSSSSSSSSISPLTNKTL) are compositionally biased toward low complexity. In terms of domain architecture, PB1 spans 309–384 (KITLKVFYKD…EINEINVKDI (76 aa)). 3 stretches are compositionally biased toward low complexity: residues 396–424 (PDKTNNSTSSYSSSSSSSSSSSSSSSSSS), 435–453 (PKTTTRPILPPTTTTTTST), and 467–483 (FGSTPSSPSFSSPSSSS). Over residues 502–528 (LLKQQNQTQSINIPPKVPTSSRPKMTQ) the composition is skewed to polar residues. The segment covering 529–570 (SHSPPSSSPLSSYSTSFQSVSSPSLSSSYNGSTSSYGGFSSS) has biased composition (low complexity). The 32-residue stretch at 573–604 (PPTPYPYQVLYTDSNEKYYLNTETNETFWELP) folds into the WW domain.

Its function is as follows. May function as an activator of NOX1, a superoxide-producing NADPH oxidase. The chain is NADPH oxidase activator (ncfA) from Dictyostelium discoideum (Social amoeba).